The following is a 564-amino-acid chain: Beta-hexosaminidase subunit B2 (564 aa).

The signal sequence occupies residues 1-19 (MKLKFIFLILFFIIGNSIG). 4 N-linked (GlcNAc...) asparagine glycosylation sites follow: Asn-43, Asn-84, Asn-303, and Asn-347. Catalysis depends on Glu-357, which acts as the Proton donor. N-linked (GlcNAc...) asparagine glycans are attached at residues Asn-364, Asn-377, Asn-439, Asn-524, and Asn-551.

It belongs to the glycosyl hydrolase 20 family.

The protein localises to the lysosome. It catalyses the reaction Hydrolysis of terminal non-reducing N-acetyl-D-hexosamine residues in N-acetyl-beta-D-hexosaminides.. In terms of biological role, responsible for the degradation of GM2 gangliosides, and a variety of other molecules containing terminal N-acetyl hexosamines. The sequence is that of Beta-hexosaminidase subunit B2 (hexb2) from Dictyostelium discoideum (Social amoeba).